We begin with the raw amino-acid sequence, 1239 residues long: DNA polymerase subunit gamma-1 (1239 aa).

The segment at 1–68 (MSRLLWRKVA…PQVLSSEGGQ (68 aa)) is disordered. 2 stretches are compositionally biased toward low complexity: residues 9–36 (VAGA…SDPS) and 44–60 (QQQQ…QQPQ). Positions 43-55 (QQQQQQQQQQQQQ) are does not contribute to polymerase and exonuclease enzymatic activities. Positions 196-200 (VFDVE) match the Exo I motif. Residue D198 is the Exonuclease activity of the active site. The Exo II signature appears at 267–275 (VGHNVSFDR). DNA is bound at residue S306. Residues 318–340 (GKHKVQPPTKQGQKSQRKARRGP) are disordered. The Exo III signature appears at 395-403 (YCAQDVWAT). Residues 506–531 (EPATASKLPIEGAGAPGDPMDQEDLG) are disordered. The segment at 510 to 571 (ASKLPIEGAG…RPQHLPGHPG (62 aa)) is accessory-interacting determinant. Position 579 (R579) interacts with RNA. S593 lines the DNA pocket. The RNA site is built by H754, G763, and K768. Positions 806 and 849 each coordinate DNA. The segment at 858–864 (TWLTASN) is trigger loop. RNA-binding residues include S863 and R869. The short motif at 887-896 (VGADVDSQEL) is the Pol A element. A 2'-deoxyribonucleoside 5'-triphosphate contacts are provided by D890, V891, S893, E895, R943, K947, and Y951. Mg(2+) contacts are provided by D890 and V891. The short motif at 943-958 (REHAKIFNYGRIYGAG) is the Pol B element. DNA-binding residues include T1094 and S1095. The Pol C motif lies at 1134-1141 (HDEVRYLV). A 2'-deoxyribonucleoside 5'-triphosphate is bound at residue D1135. D1135 lines the Mg(2+) pocket.

The protein belongs to the DNA polymerase type-A family. As to quaternary structure, heterotrimer composed of a catalytic subunit and a homodimer of accessory subunits (POLG:POLG2). Interacts with TTC3. Interacts with LIG3. Requires Mg(2+) as cofactor.

It localises to the mitochondrion. Its subcellular location is the mitochondrion matrix. The protein localises to the mitochondrion nucleoid. The catalysed reaction is DNA(n) + a 2'-deoxyribonucleoside 5'-triphosphate = DNA(n+1) + diphosphate. The enzyme catalyses a 3'-end 2'-deoxyribonucleotidyl-deoxyribonucleotide-DNA + H2O = a 3'-end 2'-deoxyribonucleotide-DNA + a 2'-deoxyribonucleoside 5'-phosphate + H(+). It catalyses the reaction a 5'-end 2'-deoxyribose-2'-deoxyribonucleotide-DNA = (2E,4S)-4-hydroxypenten-2-al-5-phosphate + a 5'-end 5'-phospho-2'-deoxyribonucleoside-DNA + H(+). With respect to regulation, inhibited by dideoxynucleotides such as antiviral agent zalcitabine. Its function is as follows. Catalytic subunit of DNA polymerase gamma solely responsible for replication of mitochondrial DNA (mtDNA). Replicates both heavy and light strands of the circular mtDNA genome using a single-stranded DNA template, RNA primers and the four deoxyribonucleoside triphosphates as substrates. Has 5' -&gt; 3' polymerase activity. Functionally interacts with TWNK and SSBP1 at the replication fork to form a highly processive replisome, where TWNK unwinds the double-stranded DNA template prior to replication and SSBP1 covers the parental heavy strand to enable continuous replication of the entire mitochondrial genome. A single nucleotide incorporation cycle includes binding of the incoming nucleotide at the insertion site, a phosphodiester bond formation reaction that extends the 3'-end of the primer DNA, and translocation of the primer terminus to the post-insertion site. After completing replication of a mtDNA strand, mediates 3' -&gt; 5' exonucleolytic degradation at the nick to enable proper ligation. Highly accurate due to high nucleotide selectivity and 3' -&gt; 5' exonucleolytic proofreading. Proficiently corrects base substitutions, single-base additions and deletions in non-repetitive sequences and short repeats, but displays lower proofreading activity when replicating longer homopolymeric stretches. Exerts exonuclease activity toward single-stranded DNA and double-stranded DNA containing 3'-terminal mispairs. When a misincorporation occurs, transitions from replication to a pro-nucleolytic editing mode and removes the missincorporated nucleoside in the exonuclease active site. Proceeds via an SN2 nucleolytic mechanism in which Asp-198 catalyzes phosphodiester bond hydrolysis and Glu-200 stabilizes the leaving group. As a result the primer strand becomes one nucleotide shorter and is positioned in the post-insertion site, ready to resume DNA synthesis. Exerts 5'-deoxyribose phosphate (dRP) lyase activity and mediates repair-associated mtDNA synthesis (gap filling) in base-excision repair pathway. Catalyzes the release of the 5'-terminal 2-deoxyribose-5-phosphate sugar moiety from incised apurinic/apyrimidinic (AP) sites to produce a substrate for DNA ligase. The dRP lyase reaction does not require divalent metal ions and likely proceeds via a Schiff base intermediate in a beta-elimination reaction mechanism. This chain is DNA polymerase subunit gamma-1, found in Homo sapiens (Human).